The chain runs to 359 residues: MMNNNGNQVSNLSNALRQVNIGNRNSNTTTDQSNINFEFSAGVNNNNNNSSSSNNNNNNNNNAQNNNSGRNGSQSNDNGNNIKDTLEQHRQQQQAFSDMSHVEYSRITKFFQEQPLEGYTLFSHRSAPNGFKVAIVLSELGFHYNTIFLDFNLGEHRAPEFVSVNPNARVPALIDHGMDNLSIWESGAILLHLVNKYYKETGNPLLWSDDLADQSQINAWLFFQTSGHAPMIGQALHFRYFHSQKIASAVERYTDEVRRVYGVVEMALAERREALVMELDTENAAAYSAGTTPMSQSRFFDYPVWLVGDKLTIADLAFVPWNNVVDRIGINIKIEFPEVYKWTKHMMRRPAVIKALRGE.

The disordered stretch occupies residues 39–82 (FSAGVNNNNNNSSSSNNNNNNNNNAQNNNSGRNGSQSNDNGNNI). A compositionally biased stretch (low complexity) spans 44 to 81 (NNNNNNSSSSNNNNNNNNNAQNNNSGRNGSQSNDNGNN). The 85-residue stretch at 117 to 201 (EGYTLFSHRS…HLVNKYYKET (85 aa)) folds into the GST N-terminal domain. A GST C-terminal domain is found at 210–359 (DLADQSQINA…PAVIKALRGE (150 aa)).

It belongs to the GST superfamily. Homodimer.

Plays an important role in the cellular response to the nitrogen source. URE2 gene plays a major part in the repression of GLN1 and GDH2 genes by glutamine, and is required for the inactivation of glutamine synthetase. URE2 gene product may catalytically inactivate GLN3 in response to an increase in the intracellular concentration of glutamine. This is Protein URE2 (URE2) from Saccharomyces paradoxus (Yeast).